A 440-amino-acid polypeptide reads, in one-letter code: Xylose isomerase (440 aa).

Catalysis depends on residues His-101 and Asp-104. Mg(2+)-binding residues include Glu-232, Glu-268, His-271, Asp-296, Asp-307, Asp-309, and Asp-339.

This sequence belongs to the xylose isomerase family. Homotetramer. The cofactor is Mg(2+).

It is found in the cytoplasm. The catalysed reaction is alpha-D-xylose = alpha-D-xylulofuranose. The polypeptide is Xylose isomerase (Cronobacter sakazakii (strain ATCC BAA-894) (Enterobacter sakazakii)).